The following is a 1128-amino-acid chain: Testis-expressed protein 2 (1128 aa).

Disordered stretches follow at residues 1-28 (MTSLNGRHAEKTIDMPKPSAPKVHVQRS), 71-99 (AKEDLYLESQGGHDPAGPVSTAPADGLSV), and 130-279 (PLAL…FFKV). A compositionally biased stretch (low complexity) spans 130-186 (PLALSPGSSSSGPLASSPSVSSLSEQKTSSSSPLSSPSKSPVLSSSASSSALSSAKP). S195 carries the phosphoserine modification. Positions 248–274 (QFTQPRNTGGDSKTAPSSPLTSPSDTR) are enriched in polar residues. T261 carries the post-translational modification Phosphothreonine. Phosphoserine is present on residues S264, S265, S269, and S294. Residues 345 to 387 (KEEEGDSEGEGYGSDSNTSRSDHLKPTEDASKEVEPKGSQASS) are disordered. A compositionally biased stretch (basic and acidic residues) spans 364 to 380 (RSDHLKPTEDASKEVEP). The next 2 membrane-spanning stretches (helical) occupy residues 473–493 (TLGFFIMCVYAYLILPLPYYM) and 495–515 (GLFLGVGLGFMTAVCMIWFFT). N-linked (GlcNAc...) asparagine glycosylation is present at N593. Positions 645–671 (SKAQSDKEATEEKPPPEKELPSEDLKK) are enriched in basic and acidic residues. Disordered regions lie at residues 645 to 688 (SKAQ…DPIL), 716 to 765 (RKPA…QKEL), 787 to 821 (QDNRSPHRSPVQSAESSPTASKKLPEAPPSEEEEQ), and 945 to 981 (ADSDEESSSAGSSEEDDPPEPTAGDKQPLPGAEGYVG). A phosphoserine mark is found at S733, S739, S745, S749, S752, S799, and S816. The segment covering 736 to 751 (SSPSGHLSHSRSSSKG) has biased composition (low complexity). Over residues 796-806 (PVQSAESSPTA) the composition is skewed to polar residues. Positions 817-1102 (EEEEQEAWVN…MPNMDDVYIP (286 aa)) constitute an SMP-LTD domain. Acidic residues predominate over residues 946-963 (DSDEESSSAGSSEEDDPP).

Its subcellular location is the endoplasmic reticulum membrane. The protein localises to the nucleus membrane. Its function is as follows. During endoplasmic reticulum (ER) stress or when cellular ceramide levels increase, may induce contacts between the ER and medial-Golgi complex to facilitate non-vesicular transport of ceramides from the ER to the Golgi complex where they are converted to complex sphingolipids, preventing toxic ceramide accumulation. This is Testis-expressed protein 2 (Tex2) from Mus musculus (Mouse).